Reading from the N-terminus, the 78-residue chain is D-alanyl carrier protein (78 aa).

Positions 1-78 constitute a Carrier domain; it reads MEFREQVLNL…KIVEALEELR (78 aa). Serine 36 carries the post-translational modification O-(pantetheine 4'-phosphoryl)serine.

Belongs to the DltC family. Post-translationally, 4'-phosphopantetheine is transferred from CoA to a specific serine of apo-DCP.

It localises to the cytoplasm. It participates in cell wall biogenesis; lipoteichoic acid biosynthesis. In terms of biological role, carrier protein involved in the D-alanylation of lipoteichoic acid (LTA). The loading of thioester-linked D-alanine onto DltC is catalyzed by D-alanine--D-alanyl carrier protein ligase DltA. The DltC-carried D-alanyl group is further transferred to cell membrane phosphatidylglycerol (PG) by forming an ester bond, probably catalyzed by DltD. D-alanylation of LTA plays an important role in modulating the properties of the cell wall in Gram-positive bacteria, influencing the net charge of the cell wall. This Staphylococcus aureus (strain Mu50 / ATCC 700699) protein is D-alanyl carrier protein.